The following is a 505-amino-acid chain: ATP synthase subunit alpha (505 aa).

Residue 171-178 (GDRQTGKT) participates in ATP binding.

It belongs to the ATPase alpha/beta chains family. As to quaternary structure, F-type ATPases have 2 components, CF(1) - the catalytic core - and CF(0) - the membrane proton channel. CF(1) has five subunits: alpha(3), beta(3), gamma(1), delta(1), epsilon(1). CF(0) has three main subunits: a(1), b(2) and c(9-12). The alpha and beta chains form an alternating ring which encloses part of the gamma chain. CF(1) is attached to CF(0) by a central stalk formed by the gamma and epsilon chains, while a peripheral stalk is formed by the delta and b chains.

The protein resides in the cell inner membrane. The catalysed reaction is ATP + H2O + 4 H(+)(in) = ADP + phosphate + 5 H(+)(out). Produces ATP from ADP in the presence of a proton gradient across the membrane. The alpha chain is a regulatory subunit. The sequence is that of ATP synthase subunit alpha from Campylobacter curvus (strain 525.92).